Consider the following 216-residue polypeptide: Nucleolar protein 12 (216 aa).

Residues 33–97 (GFHKRKVERK…LVTAKTESVQ (65 aa)) adopt a coiled-coil conformation. The tract at residues 120–216 (LLGLPLPEQG…MTGKARHNGE (97 aa)) is disordered. The segment covering 129–140 (GDQDGSQEEEVS) has biased composition (acidic residues). 2 stretches are compositionally biased toward basic residues: residues 171–183 (AHSRKKVKRKHPR) and 200–216 (KTQRRRRMTGKARHNGE).

The protein belongs to the RRP17 family. In terms of assembly, interacts with KIAA1191.

Its subcellular location is the nucleus. The protein localises to the nucleolus. The protein resides in the cytoplasm. Its function is as follows. Multifunctional RNA binding protein that plays a role in RNA metabolism and DNA maintenance. Participates in the resolution of DNA stress and the maintenance of genome integrity by localizing to sites of DNA insults. Also plays a role in proper nucleolar organization by limiting nucleolar size and regulating nucleolar number. Mechanistically, regulates the nucleolar levels of fibrillarin and nucleolin, two key players in pre-rRNA processing and ribosome assembly. The chain is Nucleolar protein 12 (Nol12) from Rattus norvegicus (Rat).